Here is a 470-residue protein sequence, read N- to C-terminus: Sorting nexin-17 (470 aa).

One can recognise a PX domain in the interval 1-109 (MHFSIPETES…SFLRRAQQET (109 aa)). Positions 36, 38, 62, and 75 each coordinate a 1,2-diacyl-sn-glycero-3-phospho-(1D-myo-inositol-3-phosphate). Residues 115–206 (EEVSLEVLLS…YKIVLRKSYW (92 aa)) enclose the Ras-associating domain. Positions 115-432 (EEVSLEVLLS…DATRESMVKL (318 aa)) are FERM-like. The segment at 270-432 (GYLRFDACVA…DATRESMVKL (163 aa)) is PTB-like F3 module. Phosphoserine is present on residues S336, S407, S409, S415, S421, S437, and S440. The segment at 400–425 (VGGTLRRSDSQQAVKSPPLLESPDAT) is disordered.

This sequence belongs to the sorting nexin family. In terms of assembly, monomer. Interacts with APP (via cytoplasmic YXNPXY motif). Interacts with KIF1B. Interacts with the C-termini of P-selectin, PTC, LDLR, VLDLR, LRP1 and LRP8. Interacts with KRIT1 (via N-terminus). Interacts with HRAS. Interacts with ITGB1 and ITGB5 (via NPxY motif). Interacts with CCDC22 and CCDC93; the interaction associates SNX17 with the CCC complex. Interacts (via C-terminus) with VPS26C and VPS35L; the interactions are direct and associate SNX17 with the retriever complex.

The protein localises to the cytoplasm. The protein resides in the early endosome. Its subcellular location is the cytoplasmic vesicle membrane. Critical regulator of endosomal recycling of numerous surface proteins, including integrins, signaling receptor and channels. Binds to NPxY sequences in the cytoplasmic tails of target cargos. Associates with retriever and CCC complexes to prevent lysosomal degradation and promote cell surface recycling of numerous cargos such as integrins ITGB1, ITGB5 and their associated alpha subunits. Also required for maintenance of normal cell surface levels of APP and LRP1. Interacts with membranes containing phosphatidylinositol 3-phosphate (PtdIns(3P)). This Pongo abelii (Sumatran orangutan) protein is Sorting nexin-17 (SNX17).